The chain runs to 69 residues: UPF0435 protein SH1076 (69 aa).

The protein belongs to the UPF0435 family.

The chain is UPF0435 protein SH1076 from Staphylococcus haemolyticus (strain JCSC1435).